The following is a 261-amino-acid chain: Oligodendrocyte transcription factor 1 (261 aa).

Residues 41–105 are disordered; sequence PPISSSSSTS…LRRKINSRER (65 aa). The span at 44 to 56 shows a compositional bias: low complexity; it reads SSSSSTSSSSTAS. Residues 95–154 form the bHLH domain; sequence QLRRKINSRERKRMQDLNLAMDALREVILPYSAAHCQGAPGRKLSKIATLLLARNYILLL.

Expressed specifically in the brain, including the corpus callosum, hippocampal and cerebral white matter. Also detected in cells scattered in gray matter, most probably in oligodendrocytes.

Its subcellular location is the nucleus. Functionally, promotes formation and maturation of oligodendrocytes, especially within the brain. Cooperates with OLIG2 to establish the pMN domain of the embryonic neural tube. The sequence is that of Oligodendrocyte transcription factor 1 (Olig1) from Rattus norvegicus (Rat).